The sequence spans 611 residues: MGVPSPTPLSSLLLLLLILGTRCYARQVHVPRGPLYRVAGTAVSISCNVSDYEGPAQQDFEWFMYRPEAPATSLGIVSTKDSQFSYAVFGPRVASGDLQVQRLKGDSVVLKIARLQAQDSGFYECYTPSTDTQYLGNYSAKVELRVLPDELQVSAAPPGPRGRQAATSPSRLTVHEGQELALGCLAQTKTKKHTHLSVSFGRAIPEAPVGRATLQEVVGLRSDMAVEAGAPYAERLASGELRLSKEGTDRYRMVVGGAQAGDSGTYHCTAAEWIQDPDGSWVQVAEKRAVLAHVDVQTLSSQLAVTVGPGERRIGPGEPLELLCNVSGALPPPGRHAAYSVGWEMAPAGAPGPGRLVAQLDTEGIGSLGPGYEDRHIAMEKVASRTYRLRLEAARPADAGTYRCLAKAYVRGSGTRLREAASARSRPLPVHVREEGVVLEAVAWLAGGTVYRGETASLLCNISVRGGPPGLRLAASWWVERPEEGELSSGPAQLVGGVGQDGVAELGVRPGGGPVSVELVGPRSHRLRLHGLGPEDEGIYHCAPSAWVQHADYSWYQAGSARSGPVTVYPYTHAVDTLFVPLLVGTGVALVTGASVLATITCCFMKRMRKR.

The N-terminal stretch at 1-25 (MGVPSPTPLSSLLLLLLILGTRCYA) is a signal peptide. 4 Ig-like C2-type domains span residues 26–143 (RQVH…AKVE), 160–284 (PRGR…WVQV), 301–422 (SQLA…EAAS), and 429–554 (PVHV…ADYS). Topologically, residues 26–577 (RQVHVPRGPL…VYPYTHAVDT (552 aa)) are extracellular. Cysteines 47 and 125 form a disulfide. 2 N-linked (GlcNAc...) asparagine glycosylation sites follow: N48 and N137. A disulfide bond links C184 and C268. An EWI motif motif is present at residues 272–274 (EWI). Disulfide bonds link C324-C404 and C460-C542. N325 carries N-linked (GlcNAc...) asparagine glycosylation. S516 carries the post-translational modification Phosphoserine. The helical transmembrane segment at 578–598 (LFVPLLVGTGVALVTGASVLA) threads the bilayer. Topologically, residues 599–611 (TITCCFMKRMRKR) are cytoplasmic. Residues C602 and C603 are each lipidated (S-palmitoyl cysteine).

As to quaternary structure, interacts directly with CD82 and CD9/tetraspanin-29. Also interacts with integrin alpha-3/beta-1 and integrin alpha-4/beta-1. Part of a complex composed of CD9, PTGFRN and CD81. Interacts with CD81/tetraspanin-28. Expressed in lymphocytes as well as in many tissues with higher expression in brain. Detected in all regions of the brain with weak expression in the pituitary. Expressed selectively by neurons but not by glial cells. Expressed in myoblasts (at protein level).

The protein resides in the cell membrane. Functionally, member of the immunoglobulin superfamily (IgSF) that links tetraspanin-enriched microdomains to the actin cytoskeleton and plays several important roles in innate and adaptive immunity. Acts as an inducible receptor of HSPA8 on dendritic cells to enhance the CCL21/SLC-dependent migration of activated mature dendritic cells while attenuating their antigen-specific stimulatory capacities. In complex with alpha-actinins ACTN1 and ACTN4, regulates actin dynamics in the immune synapse and subsequent T-cell activation. Inhibits the entry of several viruses such as hepatitis C Virus (HCV) or HIV-1. Mechanistically, promotes a change in CD81 organization at the plasma membrane by significantly restricting its diffusion which in turn influences CD81 interaction with Claudin-1/CLDN1, preventing CLDN1 from acting as a co-receptor required for HCV entry. Accumulates at the presynaptic terminal, the producer cell side of the virological synapse, to prevent HIV-1 Env-mediated cell-cell fusion. Highly expressed on malignant cells with antigen presentation defects, interacts with NK receptor KLRA9 to suppress NK-cell cytotoxicity. May participate in the regulation of neurite outgrowth and maintenance of the neural network in the adult brain. The polypeptide is Immunoglobulin superfamily member 8 (Igsf8) (Mus musculus (Mouse)).